The chain runs to 226 residues: PKHD-type hydroxylase HNE_2117 (226 aa).

The Fe2OG dioxygenase domain occupies 78–178 (TVLTPRFNRY…RLASFLWTQS (101 aa)). Fe cation contacts are provided by histidine 96, aspartate 98, and histidine 159. Residue arginine 169 coordinates 2-oxoglutarate.

Fe(2+) is required as a cofactor. The cofactor is L-ascorbate.

The polypeptide is PKHD-type hydroxylase HNE_2117 (Hyphomonas neptunium (strain ATCC 15444)).